The following is a 292-amino-acid chain: Phosphoribosylaminoimidazole-succinocarboxamide synthase (292 aa).

This sequence belongs to the SAICAR synthetase family.

The enzyme catalyses 5-amino-1-(5-phospho-D-ribosyl)imidazole-4-carboxylate + L-aspartate + ATP = (2S)-2-[5-amino-1-(5-phospho-beta-D-ribosyl)imidazole-4-carboxamido]succinate + ADP + phosphate + 2 H(+). Its pathway is purine metabolism; IMP biosynthesis via de novo pathway; 5-amino-1-(5-phospho-D-ribosyl)imidazole-4-carboxamide from 5-amino-1-(5-phospho-D-ribosyl)imidazole-4-carboxylate: step 1/2. This is Phosphoribosylaminoimidazole-succinocarboxamide synthase from Elusimicrobium minutum (strain Pei191).